Consider the following 192-residue polypeptide: NADH dehydrogenase [ubiquinone] iron-sulfur protein 3 (192 aa).

This sequence belongs to the complex I 30 kDa subunit family. In terms of assembly, complex I is composed of about 45 different subunits. This is a component of the iron-sulfur (IP) fragment of the enzyme.

The protein localises to the mitochondrion inner membrane. It carries out the reaction a ubiquinone + NADH + 5 H(+)(in) = a ubiquinol + NAD(+) + 4 H(+)(out). In terms of biological role, core subunit of the mitochondrial membrane respiratory chain NADH dehydrogenase (Complex I) that is believed to belong to the minimal assembly required for catalysis. Complex I functions in the transfer of electrons from NADH to the respiratory chain. The immediate electron acceptor for the enzyme is believed to be ubiquinone. The polypeptide is NADH dehydrogenase [ubiquinone] iron-sulfur protein 3 (NAD9) (Patellifolia webbiana (Patellaria webbiana)).